Here is a 232-residue protein sequence, read N- to C-terminus: Large ribosomal subunit protein uL1 (232 aa).

This sequence belongs to the universal ribosomal protein uL1 family. In terms of assembly, part of the 50S ribosomal subunit.

Its function is as follows. Binds directly to 23S rRNA. The L1 stalk is quite mobile in the ribosome, and is involved in E site tRNA release. Functionally, protein L1 is also a translational repressor protein, it controls the translation of the L11 operon by binding to its mRNA. In Chlamydia pneumoniae (Chlamydophila pneumoniae), this protein is Large ribosomal subunit protein uL1.